The chain runs to 39 residues: Photosystem II reaction center protein Y (39 aa).

The helical transmembrane segment at 5-23 (VLIVLTPLLIAGGWAVFNI) threads the bilayer.

The protein belongs to the PsbY family. PSII is composed of 1 copy each of membrane proteins PsbA, PsbB, PsbC, PsbD, PsbE, PsbF, PsbH, PsbI, PsbJ, PsbK, PsbL, PsbM, PsbT, PsbX, PsbY, PsbZ, Psb30/Ycf12, peripheral proteins PsbO, CyanoQ (PsbQ), PsbU, PsbV and a large number of cofactors. It forms dimeric complexes.

It is found in the cellular thylakoid membrane. Its function is as follows. Loosely associated component of the core of photosystem II (PSII), it is not always seen in crystals. PSII is a light-driven water plastoquinone oxidoreductase, using light energy to abstract electrons from H(2)O, generating a proton gradient subsequently used for ATP formation. The protein is Photosystem II reaction center protein Y of Microcystis aeruginosa (strain NIES-843 / IAM M-2473).